Here is a 291-residue protein sequence, read N- to C-terminus: Protease HtpX homolog (291 aa).

2 helical membrane-spanning segments follow: residues 4-24 and 38-58; these read VVLF…SARV and MGML…ISLL. H144 provides a ligand contact to Zn(2+). Residue E145 is part of the active site. Position 148 (H148) interacts with Zn(2+). 2 consecutive transmembrane segments (helical) span residues 159 to 179 and 199 to 219; these read LIQG…AYAI and ISSI…VMYF. Position 224 (E224) interacts with Zn(2+).

This sequence belongs to the peptidase M48B family. Zn(2+) is required as a cofactor.

The protein resides in the cell inner membrane. This is Protease HtpX homolog from Chlorobium phaeobacteroides (strain DSM 266 / SMG 266 / 2430).